We begin with the raw amino-acid sequence, 156 residues long: Ribosomal RNA large subunit methyltransferase H (156 aa).

Residues leucine 73, glycine 104, and 123–128 (LSSLTL) contribute to the S-adenosyl-L-methionine site.

This sequence belongs to the RNA methyltransferase RlmH family. Homodimer.

It is found in the cytoplasm. It catalyses the reaction pseudouridine(1915) in 23S rRNA + S-adenosyl-L-methionine = N(3)-methylpseudouridine(1915) in 23S rRNA + S-adenosyl-L-homocysteine + H(+). Specifically methylates the pseudouridine at position 1915 (m3Psi1915) in 23S rRNA. The protein is Ribosomal RNA large subunit methyltransferase H of Neisseria gonorrhoeae (strain NCCP11945).